The sequence spans 343 residues: MSKAYEESGVNIQAGYEAVERITSHVERTLRKEVLGGLGGFGATFDLSQLKMKAPVLVSGTDGVGTKLKLAIDYGKHDTIGIDAVAMCVNDILTTGAEPLYFLDYIATNKVVPSTIEQIVKGISDGCEQTNTALIGGETAEMGEMYHEGEYDIAGFAVGAVEKEDYIDGSNVEEGQAIIGLASSGIHSNGYSLVRKMIKESGVQLHDQFNGQTFLETFLAPTKLYVKPILELKKHIDIKAMSHITGGGFYENIPRALPKGLSAKIDTQSFPTLEVFNWLQKQGNISTNEMYNIFNMGIGYTIIVDKKDVQTTLTTLRAMDTTAYEIGEIIKDDDTPIHLLEVE.

This sequence belongs to the AIR synthase family.

Its subcellular location is the cytoplasm. The enzyme catalyses 2-formamido-N(1)-(5-O-phospho-beta-D-ribosyl)acetamidine + ATP = 5-amino-1-(5-phospho-beta-D-ribosyl)imidazole + ADP + phosphate + H(+). It participates in purine metabolism; IMP biosynthesis via de novo pathway; 5-amino-1-(5-phospho-D-ribosyl)imidazole from N(2)-formyl-N(1)-(5-phospho-D-ribosyl)glycinamide: step 2/2. This Staphylococcus epidermidis (strain ATCC 35984 / DSM 28319 / BCRC 17069 / CCUG 31568 / BM 3577 / RP62A) protein is Phosphoribosylformylglycinamidine cyclo-ligase.